We begin with the raw amino-acid sequence, 206 residues long: Ribonuclease HII (206 aa).

Residues 22–206 (RFICGVDEAG…ISFLKNILSL (185 aa)) enclose the RNase H type-2 domain. A divalent metal cation is bound by residues Asp-28, Glu-29, and Asp-120.

It belongs to the RNase HII family. The cofactor is Mn(2+). Mg(2+) serves as cofactor.

It is found in the cytoplasm. It carries out the reaction Endonucleolytic cleavage to 5'-phosphomonoester.. In terms of biological role, endonuclease that specifically degrades the RNA of RNA-DNA hybrids. The polypeptide is Ribonuclease HII (Caldicellulosiruptor bescii (strain ATCC BAA-1888 / DSM 6725 / KCTC 15123 / Z-1320) (Anaerocellum thermophilum)).